Here is a 131-residue protein sequence, read N- to C-terminus: Protein GLUTAMINE DUMPER 5 (131 aa).

Residues 1–34 (MRQFPSIRGNINEKMMTTMVESQTRSPWRTPVPY) lie on the Extracellular side of the membrane. Residues 35-55 (LFGGLAAMLGLIAFALLLLAC) traverse the membrane as a helical segment. The Cytoplasmic portion of the chain corresponds to 56-131 (SYWRLSRQTE…GESKVTEENH (76 aa)). The short motif at 88-92 (VIMAG) is the VIMAG element.

The protein belongs to the GLUTAMINE DUMPER 1 (TC 9.B.60) family. In terms of tissue distribution, expressed in the vascular tissues. Also detected in guard cells.

Its subcellular location is the membrane. In terms of biological role, probable subunit of an amino acid transporter involved in the regulation of the amino acid metabolism. Stimulates amino acid export by activating nonselective amino acid facilitators. In Arabidopsis thaliana (Mouse-ear cress), this protein is Protein GLUTAMINE DUMPER 5 (GDU5).